The sequence spans 179 residues: Large ribosomal subunit protein uL5 (179 aa).

It belongs to the universal ribosomal protein uL5 family. Part of the 50S ribosomal subunit; part of the 5S rRNA/L5/L18/L25 subcomplex. Contacts the 5S rRNA and the P site tRNA. Forms a bridge to the 30S subunit in the 70S ribosome.

Its function is as follows. This is one of the proteins that bind and probably mediate the attachment of the 5S RNA into the large ribosomal subunit, where it forms part of the central protuberance. In the 70S ribosome it contacts protein S13 of the 30S subunit (bridge B1b), connecting the 2 subunits; this bridge is implicated in subunit movement. Contacts the P site tRNA; the 5S rRNA and some of its associated proteins might help stabilize positioning of ribosome-bound tRNAs. This chain is Large ribosomal subunit protein uL5, found in Actinobacillus pleuropneumoniae serotype 5b (strain L20).